Here is a 214-residue protein sequence, read N- to C-terminus: uncharacterized protein (214 aa).

Functionally, URF2 product may be involved in the transfer of iron-sulfur clusters to the NADH dehydrogenase complex. It may also be required for the assembly of the NADH dehydrogenase complex. This is an uncharacterized protein from Paracoccus denitrificans.